Consider the following 387-residue polypeptide: 3-ketoacyl-CoA thiolase (387 aa).

Cys91 functions as the Acyl-thioester intermediate in the catalytic mechanism. Residues His343 and Cys373 each act as proton acceptor in the active site.

This sequence belongs to the thiolase-like superfamily. Thiolase family. In terms of assembly, heterotetramer of two alpha chains (FadB) and two beta chains (FadA).

The protein localises to the cytoplasm. The catalysed reaction is an acyl-CoA + acetyl-CoA = a 3-oxoacyl-CoA + CoA. It functions in the pathway lipid metabolism; fatty acid beta-oxidation. Functionally, catalyzes the final step of fatty acid oxidation in which acetyl-CoA is released and the CoA ester of a fatty acid two carbons shorter is formed. The polypeptide is 3-ketoacyl-CoA thiolase (Erwinia tasmaniensis (strain DSM 17950 / CFBP 7177 / CIP 109463 / NCPPB 4357 / Et1/99)).